A 132-amino-acid polypeptide reads, in one-letter code: Large-conductance mechanosensitive channel (132 aa).

A run of 3 helical transmembrane segments spans residues 14-34 (VVDLAVGVVIGAAFGKIVSSL), 38-58 (IITPLLGMVLGGVDFTSLHFG), and 67-87 (GNFIQTIFDFLIIAASIFMFV).

Belongs to the MscL family. Homopentamer.

It localises to the cell membrane. In terms of biological role, channel that opens in response to stretch forces in the membrane lipid bilayer. May participate in the regulation of osmotic pressure changes within the cell. In Bacillus cereus (strain ATCC 10987 / NRS 248), this protein is Large-conductance mechanosensitive channel.